We begin with the raw amino-acid sequence, 276 residues long: Large ribosomal subunit protein uL2 (276 aa).

2 disordered regions span residues 1 to 61 (MALK…HKQK) and 224 to 276 (AMNP…KKKN). A compositionally biased stretch (basic and acidic residues) spans 15-31 (GRIDLRKDEITAQKPEK).

This sequence belongs to the universal ribosomal protein uL2 family. As to quaternary structure, part of the 50S ribosomal subunit. Forms a bridge to the 30S subunit in the 70S ribosome.

In terms of biological role, one of the primary rRNA binding proteins. Required for association of the 30S and 50S subunits to form the 70S ribosome, for tRNA binding and peptide bond formation. It has been suggested to have peptidyltransferase activity; this is somewhat controversial. Makes several contacts with the 16S rRNA in the 70S ribosome. This Treponema denticola (strain ATCC 35405 / DSM 14222 / CIP 103919 / JCM 8153 / KCTC 15104) protein is Large ribosomal subunit protein uL2.